A 412-amino-acid polypeptide reads, in one-letter code: MAADFAASVILDTALSVSGLTDYLRLLLEHDEQLRQVWVVGEVSSTNHHRSGLFFTLQDPDGSAAIKCVVWSSQVPKLAQLPVAGEQLIVLGSIRLYPQRGEYQLSVWQAVPAGVGLQALRYQQLKNRLLAEGLFDPQRKRSLPIHPQTIAVVTSPTAAAWGDIQKTLKHRYPGLHVLFSPATVQGEQAPESIVKAIARVEKDGRAEVLILSRGGGAVEELACFNDERVVRAVAECSIPVVTGIGHQRDESLVDLVADVCVHTPTAAAEKVVPSLAELSNQHRQRIIALHQVLLHTQTSAENQLQTLRNRLQNLRLDRHLQQEAQKLNWQRQRLLQLTMGRSQQAKQHLELLRQKLISLDPKSVLQRGYAVVRQENGAIARSADELAVGNELFIQLAQGEVKAKVIEVEQRQ.

The protein belongs to the XseA family. Heterooligomer composed of large and small subunits.

It is found in the cytoplasm. The catalysed reaction is Exonucleolytic cleavage in either 5'- to 3'- or 3'- to 5'-direction to yield nucleoside 5'-phosphates.. Bidirectionally degrades single-stranded DNA into large acid-insoluble oligonucleotides, which are then degraded further into small acid-soluble oligonucleotides. The polypeptide is Exodeoxyribonuclease 7 large subunit (Nostoc sp. (strain PCC 7120 / SAG 25.82 / UTEX 2576)).